Reading from the N-terminus, the 85-residue chain is UPF0386 protein Meso_1721 (85 aa).

The protein belongs to the UPF0386 family.

This is UPF0386 protein Meso_1721 from Chelativorans sp. (strain BNC1).